The primary structure comprises 342 residues: Paired box protein Pax-9 (342 aa).

A DNA-binding region (paired) is located at residues 4-130 (AFGEVNQLGG…SSISRILRNK (127 aa)). Residues 7–63 (EVNQLGGVFVNGRPLPNAIRLRIVELAQLGIRPCDISRQLRVSHGCVSKILARYNET) are PAI subdomain. The interval 82–130 (TVVKHIRTYKQRDPGIFAWEIRDRLLADGVCDKYNVPSVSSISRILRNK) is RED subdomain. The interaction with KDM5B stretch occupies residues 168–189 (AAAAKVPTPPGVPAIPGSVALP).

In terms of assembly, interacts with KDM5B. In terms of tissue distribution, in the embryo, expressed in pharyngeal pouches and derivatives, developing vertebral column, tail, head and limbs.

Its subcellular location is the nucleus. In terms of biological role, transcription factor required for normal development of thymus, parathyroid glands, ultimobranchial bodies, teeth, skeletal elements of skull and larynx as well as distal limbs. The sequence is that of Paired box protein Pax-9 (Pax9) from Mus musculus (Mouse).